A 645-amino-acid chain; its full sequence is Zinc finger and SCAN domain-containing protein 2 (645 aa).

3 disordered regions span residues 1 to 25, 37 to 75, and 193 to 230; these read MMAA…EEDR, DDSW…GPQG, and EMPE…HGEV. Positions 59–132 constitute an SCAN box domain; it reads SAGKGSPQEE…ALVEDLTQTL (74 aa). Residues 199–214 show a composition bias toward basic and acidic residues; sequence SAQHSDGESDFERDAG. C2H2-type zinc fingers lie at residues 253–275, 281–303, 309–331, 337–359, 365–387, 393–415, 421–443, 449–471, 477–499, 505–527, 533–555, 561–583, 589–611, and 617–639; these read YECP…ERTH, YKCD…QTTH, YKCR…QRIH, FQCA…QRTH, YSCP…QGIH, YECK…QRIH, YKCT…RRTH, YQCS…RRTH, YKCG…QGMH, YECL…QRIH, YKCS…QQTH, YKCL…QRAH, YRCP…QRIH, and YKCP…QRTH.

The protein belongs to the krueppel C2H2-type zinc-finger protein family.

It localises to the nucleus. Its function is as follows. May be involved in transcriptional regulation during the post-meiotic stages of spermatogenesis. This Pongo abelii (Sumatran orangutan) protein is Zinc finger and SCAN domain-containing protein 2 (ZSCAN2).